Here is a 131-residue protein sequence, read N- to C-terminus: Small ribosomal subunit protein uS8 (131 aa).

Belongs to the universal ribosomal protein uS8 family. Part of the 30S ribosomal subunit. Contacts proteins S5 and S12.

Functionally, one of the primary rRNA binding proteins, it binds directly to 16S rRNA central domain where it helps coordinate assembly of the platform of the 30S subunit. The chain is Small ribosomal subunit protein uS8 from Burkholderia mallei (strain NCTC 10247).